Reading from the N-terminus, the 142-residue chain is Large ribosomal subunit protein uL11 (142 aa).

This sequence belongs to the universal ribosomal protein uL11 family. In terms of assembly, part of the ribosomal stalk of the 50S ribosomal subunit. Interacts with L10 and the large rRNA to form the base of the stalk. L10 forms an elongated spine to which L12 dimers bind in a sequential fashion forming a multimeric L10(L12)X complex. In terms of processing, one or more lysine residues are methylated.

Forms part of the ribosomal stalk which helps the ribosome interact with GTP-bound translation factors. This is Large ribosomal subunit protein uL11 from Vibrio vulnificus (strain YJ016).